We begin with the raw amino-acid sequence, 377 residues long: Lipoyl synthase, mitochondrial (377 aa).

Cys-103, Cys-108, Cys-114, Cys-134, Cys-138, Cys-141, and Ser-349 together coordinate [4Fe-4S] cluster. A Radical SAM core domain is found at 119-338; the sequence is EHGTQTATIM…EERGNELGFL (220 aa).

This sequence belongs to the radical SAM superfamily. Lipoyl synthase family. It depends on [4Fe-4S] cluster as a cofactor.

Its subcellular location is the mitochondrion. The enzyme catalyses [[Fe-S] cluster scaffold protein carrying a second [4Fe-4S](2+) cluster] + N(6)-octanoyl-L-lysyl-[protein] + 2 oxidized [2Fe-2S]-[ferredoxin] + 2 S-adenosyl-L-methionine + 4 H(+) = [[Fe-S] cluster scaffold protein] + N(6)-[(R)-dihydrolipoyl]-L-lysyl-[protein] + 4 Fe(3+) + 2 hydrogen sulfide + 2 5'-deoxyadenosine + 2 L-methionine + 2 reduced [2Fe-2S]-[ferredoxin]. It participates in protein modification; protein lipoylation via endogenous pathway; protein N(6)-(lipoyl)lysine from octanoyl-[acyl-carrier-protein]: step 2/2. Functionally, catalyzes the radical-mediated insertion of two sulfur atoms into the C-6 and C-8 positions of the octanoyl moiety bound to the lipoyl domains of lipoate-dependent enzymes, thereby converting the octanoylated domains into lipoylated derivatives. In Drosophila melanogaster (Fruit fly), this protein is Lipoyl synthase, mitochondrial.